The following is a 159-amino-acid chain: Ribosomal RNA large subunit methyltransferase H (159 aa).

S-adenosyl-L-methionine-binding positions include Leu-76, Gly-108, and 127 to 132; that span reads FSKMTF.

This sequence belongs to the RNA methyltransferase RlmH family. Homodimer.

The protein localises to the cytoplasm. The catalysed reaction is pseudouridine(1915) in 23S rRNA + S-adenosyl-L-methionine = N(3)-methylpseudouridine(1915) in 23S rRNA + S-adenosyl-L-homocysteine + H(+). Its function is as follows. Specifically methylates the pseudouridine at position 1915 (m3Psi1915) in 23S rRNA. The polypeptide is Ribosomal RNA large subunit methyltransferase H (Geobacillus kaustophilus (strain HTA426)).